Here is a 65-residue protein sequence, read N- to C-terminus: Large ribosomal subunit protein bL35 (65 aa).

It belongs to the bacterial ribosomal protein bL35 family.

The protein is Large ribosomal subunit protein bL35 of Synechococcus sp. (strain CC9605).